A 563-amino-acid chain; its full sequence is Chaperonin GroEL 1 (563 aa).

ATP contacts are provided by residues 29–32 (TIGP), 86–90 (DGTTT), Gly-413, and Asp-492. The segment at 520-541 (DKPEPPSAPGAEGGDPMGGMGG) is disordered. The span at 530–541 (AEGGDPMGGMGG) shows a compositional bias: gly residues.

The protein belongs to the chaperonin (HSP60) family. Forms a cylinder of 14 subunits composed of two heptameric rings stacked back-to-back. Interacts with the co-chaperonin GroES.

The protein resides in the cytoplasm. It catalyses the reaction ATP + H2O + a folded polypeptide = ADP + phosphate + an unfolded polypeptide.. In terms of biological role, together with its co-chaperonin GroES, plays an essential role in assisting protein folding. The GroEL-GroES system forms a nano-cage that allows encapsulation of the non-native substrate proteins and provides a physical environment optimized to promote and accelerate protein folding. In Prochlorococcus marinus (strain NATL1A), this protein is Chaperonin GroEL 1.